The primary structure comprises 286 residues: Protein PXR1 (286 aa).

The interval 1–20 (MGLAGTKVKQRFGLDPRNTS) is disordered. Residues 25–71 (KSRFGHRYLESMGWAPGKGLGLVEHATTTHVKVSVKDDTVGLGAKLA) form the G-patch domain. Positions 148–255 (EDESEVNFKS…PRKHDQISNV (108 aa)) are disordered. Basic and acidic residues predominate over residues 168 to 198 (PSRDSTSHAKRMRGDESKKSTRDQSKQERKE). Residues 199 to 230 (KKIKTEKKEKKEKKEKKEKKEKKEKKEKKEKK) are compositionally biased toward basic residues.

It belongs to the PINX1 family.

It is found in the nucleus. The protein resides in the nucleolus. Functionally, involved in rRNA-processing at A0, A1 and A2 sites and negatively regulates telomerase. The chain is Protein PXR1 (PXR1) from Meyerozyma guilliermondii (strain ATCC 6260 / CBS 566 / DSM 6381 / JCM 1539 / NBRC 10279 / NRRL Y-324) (Yeast).